The primary structure comprises 736 residues: Putative ATP-dependent RNA helicase CG14443 (736 aa).

4 disordered regions span residues 32-58 (TKSSIWGSSASDISGQSRSLKSSSSVL), 73-166 (GIEG…GERP), 183-237 (NSFK…NSWR), and 265-296 (SFTRSRSPHRNTLCYQDQSKNPSRPSNYNTWK). Low complexity-rich tracts occupy residues 34–58 (SSIWGSSASDISGQSRSLKSSSSVL) and 125–160 (SSESAHSSGSESSSSDSNSGSSSDSDSTTGSSSHGS). The segment covering 190-199 (TSRENKESRS) has biased composition (basic and acidic residues). Residues 277–296 (LCYQDQSKNPSRPSNYNTWK) are compositionally biased toward polar residues. The Q motif motif lies at 330-358 (LSFERSGFNATILQQLEDQGYDGPTPIQA). In terms of domain architecture, Helicase ATP-binding spans 361 to 534 (WSIAKEGKNI…NKFLGQYTAI (174 aa)). 374 to 381 (SGKGTGKT) is a binding site for ATP. Positions 482–485 (DNID) match the DEAD box motif. Positions 561–719 (KVERLMKELT…LLQLAEEKMF (159 aa)) constitute a Helicase C-terminal domain.

Belongs to the DEAD box helicase family.

It carries out the reaction ATP + H2O = ADP + phosphate + H(+). Its function is as follows. Probable ATP-binding RNA helicase. The protein is Putative ATP-dependent RNA helicase CG14443 of Drosophila melanogaster (Fruit fly).